Reading from the N-terminus, the 429-residue chain is Serine--tRNA ligase (429 aa).

Position 235–237 (235–237 (TAE)) interacts with L-serine. ATP is bound at residue 266–268 (RSE). Glutamate 289 lines the L-serine pocket. 353-356 (EISS) contacts ATP. Serine 389 is a binding site for L-serine.

This sequence belongs to the class-II aminoacyl-tRNA synthetase family. Type-1 seryl-tRNA synthetase subfamily. In terms of assembly, homodimer. The tRNA molecule binds across the dimer.

It is found in the cytoplasm. The enzyme catalyses tRNA(Ser) + L-serine + ATP = L-seryl-tRNA(Ser) + AMP + diphosphate + H(+). It catalyses the reaction tRNA(Sec) + L-serine + ATP = L-seryl-tRNA(Sec) + AMP + diphosphate + H(+). It functions in the pathway aminoacyl-tRNA biosynthesis; selenocysteinyl-tRNA(Sec) biosynthesis; L-seryl-tRNA(Sec) from L-serine and tRNA(Sec): step 1/1. Its function is as follows. Catalyzes the attachment of serine to tRNA(Ser). Is also able to aminoacylate tRNA(Sec) with serine, to form the misacylated tRNA L-seryl-tRNA(Sec), which will be further converted into selenocysteinyl-tRNA(Sec). The sequence is that of Serine--tRNA ligase from Haemophilus influenzae (strain PittEE).